A 626-amino-acid polypeptide reads, in one-letter code: Ankyrin repeat domain-containing protein 13B (626 aa).

Residue M1 is modified to N-acetylmethionine. ANK repeat units follow at residues 47–76 (RGRTPLHLATTLGHLECARVLLAHGADVGR) and 80–109 (SGWTVLQEAVSTRDLELVQLVLRYRDYQRV). Residues 442-470 (PVPSVRGSPGSETPSPGSDSSSVSSSSST) are disordered. The span at 448-470 (GSPGSETPSPGSDSSSVSSSSST) shows a compositional bias: low complexity. In terms of domain architecture, UIM 1 spans 503–522 (EDDDLLRFAIQQSLLEAGSE). Residues 534 to 614 (NSKPGTHPMS…RRRVRQEEEE (81 aa)) are disordered. The segment covering 554-575 (PPTPQRQPMPPAPVPSPRPSPG) has biased composition (pro residues). UIM domains lie at 585-604 (SYDEQLRLAMELSAQEQEER) and 610-626 (QEEEELERILRLSLTEQ).

In terms of assembly, interacts with EGFR (ubiquitinated); the interaction is direct and may regulate EGFR internalization.

The protein localises to the cell membrane. The protein resides in the late endosome. Its subcellular location is the early endosome. In terms of biological role, ubiquitin-binding protein that specifically recognizes and binds 'Lys-63'-linked ubiquitin. Does not bind 'Lys-48'-linked ubiquitin. Positively regulates the internalization of ligand-activated EGFR by binding to the Ub moiety of ubiquitinated EGFR at the cell membrane. This is Ankyrin repeat domain-containing protein 13B (Ankrd13b) from Mus musculus (Mouse).